The following is a 404-amino-acid chain: Cysteine desulfurase IscS (404 aa).

Pyridoxal 5'-phosphate contacts are provided by residues 75–76 (AT), asparagine 155, glutamine 183, and 203–205 (SAH). Lysine 206 carries the post-translational modification N6-(pyridoxal phosphate)lysine. Threonine 243 is a pyridoxal 5'-phosphate binding site. Cysteine 328 functions as the Cysteine persulfide intermediate in the catalytic mechanism. Cysteine 328 lines the [2Fe-2S] cluster pocket.

This sequence belongs to the class-V pyridoxal-phosphate-dependent aminotransferase family. NifS/IscS subfamily. Homodimer. Forms a heterotetramer with IscU, interacts with other sulfur acceptors. Pyridoxal 5'-phosphate serves as cofactor.

The protein resides in the cytoplasm. It carries out the reaction (sulfur carrier)-H + L-cysteine = (sulfur carrier)-SH + L-alanine. Its pathway is cofactor biosynthesis; iron-sulfur cluster biosynthesis. Functionally, master enzyme that delivers sulfur to a number of partners involved in Fe-S cluster assembly, tRNA modification or cofactor biosynthesis. Catalyzes the removal of elemental sulfur atoms from cysteine to produce alanine. Functions as a sulfur delivery protein for Fe-S cluster synthesis onto IscU, an Fe-S scaffold assembly protein, as well as other S acceptor proteins. The chain is Cysteine desulfurase IscS from Shewanella loihica (strain ATCC BAA-1088 / PV-4).